Consider the following 159-residue polypeptide: Ribosomal RNA large subunit methyltransferase H (159 aa).

Residues leucine 76, glycine 108, and 127-132 (FGLLTL) each bind S-adenosyl-L-methionine.

Belongs to the RNA methyltransferase RlmH family. As to quaternary structure, homodimer.

Its subcellular location is the cytoplasm. It carries out the reaction pseudouridine(1915) in 23S rRNA + S-adenosyl-L-methionine = N(3)-methylpseudouridine(1915) in 23S rRNA + S-adenosyl-L-homocysteine + H(+). Functionally, specifically methylates the pseudouridine at position 1915 (m3Psi1915) in 23S rRNA. The polypeptide is Ribosomal RNA large subunit methyltransferase H (Streptococcus agalactiae serotype Ia (strain ATCC 27591 / A909 / CDC SS700)).